The primary structure comprises 704 residues: Polyribonucleotide nucleotidyltransferase (704 aa).

Mg(2+) is bound by residues Asp-490 and Asp-496. One can recognise a KH domain in the interval 557-616 (PKIEMIQIKPAKIKDVIGKGGETINSIIDETGVKIDIDQDGNVSIASSDAEMIKKAIKII). Residues 626 to 694 (GQVYLAKVVR…KQGRVNVSRK (69 aa)) form the S1 motif domain.

This sequence belongs to the polyribonucleotide nucleotidyltransferase family. Mg(2+) serves as cofactor.

It is found in the cytoplasm. The enzyme catalyses RNA(n+1) + phosphate = RNA(n) + a ribonucleoside 5'-diphosphate. In terms of biological role, involved in mRNA degradation. Catalyzes the phosphorolysis of single-stranded polyribonucleotides processively in the 3'- to 5'-direction. In Enterococcus faecalis (strain ATCC 700802 / V583), this protein is Polyribonucleotide nucleotidyltransferase.